Consider the following 454-residue polypeptide: Epsin-1 (454 aa).

The ENTH domain occupies 11-143 (NLVKGYSSTQ…SDDERLNEER (133 aa)). 2 disordered regions span residues 142–195 (ERNM…EDYE) and 292–350 (YLAS…GNQS). The segment covering 149–160 (GRNRKGRRRRGT) has biased composition (basic residues). The residue at position 160 (Thr-160) is a Phosphothreonine. Phosphoserine is present on Ser-163. UIM domains follow at residues 165 to 184 (ENDD…AEED) and 189 to 208 (KQDE…EELK). Position 180 is a phosphothreonine (Thr-180). The span at 180 to 191 (TAEEDERRRKQD) shows a compositional bias: basic and acidic residues. A compositionally biased stretch (low complexity) spans 292–302 (YLASMQQQQQA). Composition is skewed to polar residues over residues 303–329 (MSNN…ASSP) and 340–350 (PLIQNRTGNQS). Position 328 is a phosphoserine (Ser-328). Lys-357 is covalently cross-linked (Glycyl lysine isopeptide (Lys-Gly) (interchain with G-Cter in ubiquitin)). 5 positions are modified to phosphothreonine: Thr-364, Thr-366, Thr-384, Thr-386, and Thr-388. The segment covering 384–398 (TKTGTFINSQGTGYR) has biased composition (polar residues). Residues 384 to 405 (TKTGTFINSQGTGYRQVSDDPN) form a disordered region. Thr-395 and Thr-415 each carry phosphothreonine; by PRK1. Positions 418-428 (PSTSVVPTQTG) are enriched in polar residues. The disordered stretch occupies residues 418 to 454 (PSTSVVPTQTGYGFGNQSQQQSQNNGSNNRGYTLIDL). The segment covering 432 to 446 (GNQSQQQSQNNGSNN) has biased composition (low complexity). A clathrin-binding region spans residues 447 to 454 (RGYTLIDL).

The protein belongs to the epsin family. Interacts with EDE1 and PAN1.

It localises to the cytoplasm. The protein localises to the membrane. Its function is as follows. Binds to membranes enriched in phosphatidylinositol 3,5-bisphosphate (PtdIns(3,5)P2) and phosphatidylinositol 4,5-bisphosphate (PtdIns(4,5)P2). Required for endocytosis and localization of actin. Negatively regulated via phosphorylation. The chain is Epsin-1 (ENT1) from Saccharomyces cerevisiae (strain ATCC 204508 / S288c) (Baker's yeast).